The primary structure comprises 184 residues: UPF0149 protein Avin_47340 (184 aa).

Belongs to the UPF0149 family.

The sequence is that of UPF0149 protein Avin_47340 from Azotobacter vinelandii (strain DJ / ATCC BAA-1303).